Reading from the N-terminus, the 355-residue chain is Erythronate-4-phosphate dehydrogenase (355 aa).

Residues Ser45 and Thr66 each contribute to the substrate site. Position 146 (Asp146) interacts with NAD(+). Residue Arg206 is part of the active site. Asp229 is an NAD(+) binding site. Residue Glu234 is part of the active site. His251 acts as the Proton donor in catalysis. Position 254 (Gly254) interacts with NAD(+). Tyr255 is a binding site for substrate.

The protein belongs to the D-isomer specific 2-hydroxyacid dehydrogenase family. PdxB subfamily. Homodimer.

The protein localises to the cytoplasm. The catalysed reaction is 4-phospho-D-erythronate + NAD(+) = (R)-3-hydroxy-2-oxo-4-phosphooxybutanoate + NADH + H(+). The protein operates within cofactor biosynthesis; pyridoxine 5'-phosphate biosynthesis; pyridoxine 5'-phosphate from D-erythrose 4-phosphate: step 2/5. Its function is as follows. Catalyzes the oxidation of erythronate-4-phosphate to 3-hydroxy-2-oxo-4-phosphonooxybutanoate. This Acinetobacter baumannii (strain ATCC 17978 / DSM 105126 / CIP 53.77 / LMG 1025 / NCDC KC755 / 5377) protein is Erythronate-4-phosphate dehydrogenase.